The chain runs to 356 residues: UDP-N-acetylglucosamine--N-acetylmuramyl-(pentapeptide) pyrophosphoryl-undecaprenol N-acetylglucosamine transferase (356 aa).

UDP-N-acetyl-alpha-D-glucosamine-binding positions include 12-14 (SGG), Asn-120, Arg-163, Ser-187, and Gln-286.

It belongs to the glycosyltransferase 28 family. MurG subfamily.

Its subcellular location is the cell inner membrane. It carries out the reaction di-trans,octa-cis-undecaprenyl diphospho-N-acetyl-alpha-D-muramoyl-L-alanyl-D-glutamyl-meso-2,6-diaminopimeloyl-D-alanyl-D-alanine + UDP-N-acetyl-alpha-D-glucosamine = di-trans,octa-cis-undecaprenyl diphospho-[N-acetyl-alpha-D-glucosaminyl-(1-&gt;4)]-N-acetyl-alpha-D-muramoyl-L-alanyl-D-glutamyl-meso-2,6-diaminopimeloyl-D-alanyl-D-alanine + UDP + H(+). Its pathway is cell wall biogenesis; peptidoglycan biosynthesis. Cell wall formation. Catalyzes the transfer of a GlcNAc subunit on undecaprenyl-pyrophosphoryl-MurNAc-pentapeptide (lipid intermediate I) to form undecaprenyl-pyrophosphoryl-MurNAc-(pentapeptide)GlcNAc (lipid intermediate II). The protein is UDP-N-acetylglucosamine--N-acetylmuramyl-(pentapeptide) pyrophosphoryl-undecaprenol N-acetylglucosamine transferase of Pelagibacter ubique (strain HTCC1062).